The following is a 378-amino-acid chain: MGQSKKLNNQPRSLSPLVLLSGISKSFDGKEVISQLDLTINNGEFLTLLGPSGCGKTTVLRLIAGLETVDAGHIMLDNQDITHVPAENRYVNTVFQSYALFPHMTVFENVAFGLRMQKTPAAEIAPRVTDALRMVQLEEFAQRKPHQLSGGQQQRVAIARAVVNKPRLLLLDESLSALDYKLRKQMQNELKALQRKLGITFVFVTHDQEEALTMSDRIVVMRNGVIEQDGTPREIYEEPKNLFVAGFIGEINRFDATVIERLDEQRVRASVEGRECNIYVNFAVEPGQKLNVLLRPEDLRVEEINDDNHIEGLIGYVRERNYKGMTLESVVELENGKMVMVSEFFNEDDPDFDHSLDQKMAISWVESWEVVLADEEHK.

The region spanning 18 to 248 is the ABC transporter domain; the sequence is VLLSGISKSF…PKNLFVAGFI (231 aa). 50–57 is a binding site for ATP; the sequence is GPSGCGKT.

This sequence belongs to the ABC transporter superfamily. Spermidine/putrescine importer (TC 3.A.1.11.1) family. The complex is composed of two ATP-binding proteins (PotA), two transmembrane proteins (PotB and PotC) and a solute-binding protein (PotD).

The protein localises to the cell inner membrane. The enzyme catalyses ATP + H2O + polyamine-[polyamine-binding protein]Side 1 = ADP + phosphate + polyamineSide 2 + [polyamine-binding protein]Side 1.. In terms of biological role, part of the ABC transporter complex PotABCD involved in spermidine/putrescine import. Responsible for energy coupling to the transport system. The chain is Spermidine/putrescine import ATP-binding protein PotA from Salmonella choleraesuis (strain SC-B67).